A 103-amino-acid polypeptide reads, in one-letter code: uncharacterized protein (103 aa).

The next 2 membrane-spanning stretches (helical) occupy residues Pro-42–Ala-62 and Thr-65–Ala-85.

It localises to the membrane. This is an uncharacterized protein from Saccharomyces cerevisiae (strain ATCC 204508 / S288c) (Baker's yeast).